Reading from the N-terminus, the 380-residue chain is 3-dehydroquinate synthase (380 aa).

It belongs to the archaeal-type DHQ synthase family.

The enzyme catalyses 2-amino-2,3,7-trideoxy-D-lyxo-hept-6-ulosonate + NAD(+) + H2O = 3-dehydroquinate + NH4(+) + NADH + H(+). Its function is as follows. Catalyzes the oxidative deamination and cyclization of 2-amino-3,7-dideoxy-D-threo-hept-6-ulosonic acid (ADH) to yield 3-dehydroquinate (DHQ), which is fed into the canonical shikimic pathway of aromatic amino acid biosynthesis. In Methanosarcina mazei (strain ATCC BAA-159 / DSM 3647 / Goe1 / Go1 / JCM 11833 / OCM 88) (Methanosarcina frisia), this protein is 3-dehydroquinate synthase.